A 433-amino-acid polypeptide reads, in one-letter code: Enolase (433 aa).

Residue glutamine 167 coordinates (2R)-2-phosphoglycerate. Residue glutamate 209 is the Proton donor of the active site. Mg(2+) contacts are provided by aspartate 246, glutamate 291, and aspartate 318. Lysine 326 is subject to N6-acetyllysine. Residues lysine 343, arginine 372, serine 373, and lysine 394 each coordinate (2R)-2-phosphoglycerate. Lysine 343 acts as the Proton acceptor in catalysis. Lysine 343 is subject to N6-(2-hydroxyisobutyryl)lysine.

Belongs to the enolase family. In terms of assembly, component of the RNA degradosome, a multiprotein complex involved in RNA processing and mRNA degradation. It depends on Mg(2+) as a cofactor. Post-translationally, acetylated and 2-hydroxyisobutyrylated at Lys-326 and Lys-343, respectively, reducing the enolase activity. Deacetylated and de-2-hydroxyisobutyrylated by NpdA/CobB, increasing the enolase activity.

It is found in the cytoplasm. It localises to the secreted. Its subcellular location is the cell surface. The enzyme catalyses (2R)-2-phosphoglycerate = phosphoenolpyruvate + H2O. The protein operates within carbohydrate degradation; glycolysis; pyruvate from D-glyceraldehyde 3-phosphate: step 4/5. Functionally, catalyzes the reversible conversion of 2-phosphoglycerate (2-PG) into phosphoenolpyruvate (PEP). It is essential for the degradation of carbohydrates via glycolysis. This chain is Enolase, found in Proteus mirabilis (strain HI4320).